A 359-amino-acid polypeptide reads, in one-letter code: Oplophorus-luciferin 2-monooxygenase non-catalytic subunit (359 aa).

Positions 1 to 39 (MAVNFKFSLLTITIVVNILVYCNASAIKFDVDLEKVPSN) are cleaved as a signal peptide. 8 LRR repeats span residues 135–158 (AATLEKLVLLKNDLSSFPFEEMSQ), 160–180 (TKLNWLELSVNSITGWPALSS), 181–203 (DTLANLILFRNPIGNIPVDAFQT), 228–251 (SPKLQKLVLGYNGLTSLPVGAIKL), 255–278 (GPTTSNLGITNNQIISFPEGAVEG), 280–300 (QGILGIDFNRVTSLSEEVWRP), 302–325 (LENLFQFSLLNNPLACVCDVMWLI), and 331–356 (LAKIKGNPRCAGGKRLKNLDPAVFHA).

Heterotetramer of a catalytic 19 kDa and a non-catalytic 35 kDa subunit.

The protein localises to the secreted. Its function is as follows. Non-catalytic subunit of oplophorus-luciferin 2-monooxygenase. May stabilize the active conformation of the catalytic subunit. The chain is Oplophorus-luciferin 2-monooxygenase non-catalytic subunit from Oplophorus gracilirostris (Luminous shrimp).